Reading from the N-terminus, the 319-residue chain is Thioredoxin reductase (319 aa).

Residues 11 to 14, 40 to 41, Q45, N54, V87, C145, D288, and 295 to 297 each bind FAD; these read SGPA, VA, and RQA. A disulfide bridge links C142 with C145.

It belongs to the class-II pyridine nucleotide-disulfide oxidoreductase family. As to quaternary structure, homodimer. It depends on FAD as a cofactor.

The protein resides in the cytoplasm. The enzyme catalyses [thioredoxin]-dithiol + NADP(+) = [thioredoxin]-disulfide + NADPH + H(+). The chain is Thioredoxin reductase (TRR1) from Eremothecium gossypii (strain ATCC 10895 / CBS 109.51 / FGSC 9923 / NRRL Y-1056) (Yeast).